The primary structure comprises 403 residues: Subtilisin-like protease CPC735_035780 (403 aa).

The signal sequence occupies residues 1-19; it reads MSIMKIATLFFAALSAVEA. A propeptide spanning residues 20–117 is cleaved from the precursor; it reads AKLLTPSDKR…VEPDRRVHLT (98 aa). Residues 35-116 form the Inhibitor I9 domain; it reads SYIVVMKDNV…YVEPDRRVHL (82 aa). Residues 127 to 403 form the Peptidase S8 domain; the sequence is SWGLGRISHR…NKLLYNNSGR (277 aa). Residues Asp-159 and His-190 each act as charge relay system in the active site. Residues Asn-233 and Asn-251 are each glycosylated (N-linked (GlcNAc...) asparagine). Ser-349 (charge relay system) is an active-site residue. Asn-399 carries an N-linked (GlcNAc...) asparagine glycan.

The protein belongs to the peptidase S8 family.

It localises to the secreted. Functionally, secreted subtilisin-like serine protease with keratinolytic activity that contributes to pathogenicity. The chain is Subtilisin-like protease CPC735_035780 from Coccidioides posadasii (strain C735) (Valley fever fungus).